An 853-amino-acid chain; its full sequence is DNA mismatch repair protein MutS (853 aa).

614-621 is a binding site for ATP; it reads GPNMGGKS.

This sequence belongs to the DNA mismatch repair MutS family.

This protein is involved in the repair of mismatches in DNA. It is possible that it carries out the mismatch recognition step. This protein has a weak ATPase activity. The sequence is that of DNA mismatch repair protein MutS from Escherichia coli O6:K15:H31 (strain 536 / UPEC).